A 690-amino-acid polypeptide reads, in one-letter code: Elongation factor G (690 aa).

Residues 8-283 enclose the tr-type G domain; that stretch reads SKCRNIGIMA…AVVDFLPAPN (276 aa). GTP is bound by residues 17 to 24, 81 to 85, and 135 to 138; these read AHIDAGKT, DTPGH, and NKMD.

It belongs to the TRAFAC class translation factor GTPase superfamily. Classic translation factor GTPase family. EF-G/EF-2 subfamily.

Its subcellular location is the cytoplasm. Catalyzes the GTP-dependent ribosomal translocation step during translation elongation. During this step, the ribosome changes from the pre-translocational (PRE) to the post-translocational (POST) state as the newly formed A-site-bound peptidyl-tRNA and P-site-bound deacylated tRNA move to the P and E sites, respectively. Catalyzes the coordinated movement of the two tRNA molecules, the mRNA and conformational changes in the ribosome. The protein is Elongation factor G of Ehrlichia chaffeensis (strain ATCC CRL-10679 / Arkansas).